The sequence spans 196 residues: Lipoprotein signal peptidase (196 aa).

A disordered region spans residues methionine 1 to serine 24. 3 helical membrane passes run isoleucine 40 to leucine 60, isoleucine 92 to phenylalanine 112, and leucine 118 to leucine 138. Active-site residues include aspartate 155 and aspartate 169. A helical transmembrane segment spans residues valine 164–phenylalanine 184.

It belongs to the peptidase A8 family.

The protein resides in the cell membrane. The catalysed reaction is Release of signal peptides from bacterial membrane prolipoproteins. Hydrolyzes -Xaa-Yaa-Zaa-|-(S,diacylglyceryl)Cys-, in which Xaa is hydrophobic (preferably Leu), and Yaa (Ala or Ser) and Zaa (Gly or Ala) have small, neutral side chains.. Its pathway is protein modification; lipoprotein biosynthesis (signal peptide cleavage). Functionally, this protein specifically catalyzes the removal of signal peptides from prolipoproteins. The chain is Lipoprotein signal peptidase from Streptomyces griseus subsp. griseus (strain JCM 4626 / CBS 651.72 / NBRC 13350 / KCC S-0626 / ISP 5235).